Reading from the N-terminus, the 121-residue chain is Large ribosomal subunit protein uL18 (121 aa).

This sequence belongs to the universal ribosomal protein uL18 family. In terms of assembly, part of the 50S ribosomal subunit; part of the 5S rRNA/L5/L18/L25 subcomplex. Contacts the 5S and 23S rRNAs.

Its function is as follows. This is one of the proteins that bind and probably mediate the attachment of the 5S RNA into the large ribosomal subunit, where it forms part of the central protuberance. This is Large ribosomal subunit protein uL18 from Desulfotalea psychrophila (strain LSv54 / DSM 12343).